The primary structure comprises 163 residues: Disulfide bond formation protein B (163 aa).

Residues 1-9 (MKKLTYRKI) lie on the Cytoplasmic side of the membrane. The chain crosses the membrane as a helical span at residues 10 to 26 (QSFQAIITVLVIFASFY). Residues 27–44 (LEYAAGLQPCPLCLMQRV) are Periplasmic-facing. Cys-36 and Cys-39 form a disulfide bridge. Residues 45-58 (CVFILLGLMGVSLG) form a helical membrane-spanning segment. The Cytoplasmic portion of the chain corresponds to 59–64 (TVKKAH). The helical transmembrane segment at 65–82 (IVSLIQFQVACAGLYFSL) threads the bilayer. Residues 83–139 (RQLWLQSLPSDQAPACMPGLDVLIQYFPWQTVAKALFWGAGDCAEVTWTMFGVSMPG) are Periplasmic-facing. Cys-98 and Cys-125 are joined by a disulfide. The helical transmembrane segment at 140–158 (WAAMYFLSMAIMGLFLFFR) threads the bilayer. At 159 to 163 (TRTIN) the chain is on the cytoplasmic side.

The protein belongs to the DsbB family.

The protein resides in the cell inner membrane. In terms of biological role, required for disulfide bond formation in some periplasmic proteins. Acts by oxidizing the DsbA protein. The chain is Disulfide bond formation protein B from Legionella pneumophila (strain Lens).